Consider the following 503-residue polypeptide: Probable cytosol aminopeptidase (503 aa).

Mn(2+)-binding residues include K268 and D273. K280 is an active-site residue. D291, D350, and E352 together coordinate Mn(2+). The active site involves R354.

The protein belongs to the peptidase M17 family. Mn(2+) serves as cofactor.

Its subcellular location is the cytoplasm. The catalysed reaction is Release of an N-terminal amino acid, Xaa-|-Yaa-, in which Xaa is preferably Leu, but may be other amino acids including Pro although not Arg or Lys, and Yaa may be Pro. Amino acid amides and methyl esters are also readily hydrolyzed, but rates on arylamides are exceedingly low.. It carries out the reaction Release of an N-terminal amino acid, preferentially leucine, but not glutamic or aspartic acids.. Functionally, presumably involved in the processing and regular turnover of intracellular proteins. Catalyzes the removal of unsubstituted N-terminal amino acids from various peptides. The protein is Probable cytosol aminopeptidase of Herminiimonas arsenicoxydans.